The chain runs to 122 residues: Replication factor A protein 3 (122 aa).

This sequence belongs to the replication factor A protein 3 family. Component of the heterotrimeric canonical replication protein A complex (RPA). In terms of processing, the N-terminus is blocked.

Its subcellular location is the nucleus. As part of the replication protein A (RPA/RP-A), a single-stranded DNA-binding heterotrimeric complex, may play an essential role in DNA replication, recombination and repair. Binds and stabilizes single-stranded DNA intermediates, preventing complementary DNA reannealing and recruiting different proteins involved in DNA metabolism. Stimulates the activity of a cognate strand exchange protein (SEP1). In Saccharomyces cerevisiae (strain ATCC 204508 / S288c) (Baker's yeast), this protein is Replication factor A protein 3 (RFA3).